We begin with the raw amino-acid sequence, 120 residues long: uncharacterized protein (120 aa).

The interval 79–120 (TGNEIPPEPEQEVVASPVTEQKKAEPSAPPKGSKKKKRGKKK) is disordered. Basic residues predominate over residues 110-120 (GSKKKKRGKKK).

This is an uncharacterized protein from Schizosaccharomyces pombe (strain 972 / ATCC 24843) (Fission yeast).